The chain runs to 1320 residues: Sister chromatid cohesion protein PDS5 homolog A (1320 aa).

HEAT repeat units lie at residues 156 to 195, 272 to 310, 388 to 426, 709 to 747, and 990 to 1028; these read NEIF…EGDG, PLLL…AKDS, NLVN…KYCL, PQIR…NKEV, and SLLP…CLWF. Residues 1158 to 1179 show a composition bias toward polar residues; it reads TFTSETGSNASTNSQPSSPATN. Residues 1158–1320 are disordered; that stretch reads TFTSETGSNA…APQRQIDLQR (163 aa). A compositionally biased stretch (basic and acidic residues) spans 1180–1194; the sequence is KSRDVSSEVGARENE. The span at 1225-1241 shows a compositional bias: polar residues; that stretch reads GTENSVSSNPSAGSQPP. The segment covering 1255–1267 has biased composition (low complexity); the sequence is AGAATQEKEAGAT. Over residues 1283–1293 the composition is skewed to polar residues; sequence QDPSSTASTDA. Over residues 1294–1309 the composition is skewed to basic and acidic residues; that stretch reads LSDKTPKQQKEAEPKR.

This sequence belongs to the PDS5 family. Interacts with the cohesin complex. Binds chromatin in a cohesin-dependent manner.

The protein resides in the nucleus. May regulate sister chromatid cohesion during mitosis and couple it to DNA replication. This is Sister chromatid cohesion protein PDS5 homolog A from Danio rerio (Zebrafish).